The primary structure comprises 1633 residues: Laminin-like protein lam-2 (1633 aa).

A signal peptide spans 1-19 (MTSILWLFSLAVLWHMGQP). Positions 47 to 286 (QPQRCVPDFV…AISDFAVGGR (240 aa)) constitute a Laminin N-terminal domain. Residues N116 and N136 are each glycosylated (N-linked (GlcNAc...) asparagine). 16 disulfide bridges follow: C287–C296, C289–C310, C312–C321, C324–C344, C347–C356, C349–C372, C375–C384, C387–C400, C403–C415, C405–C421, C423–C432, C435–C447, C450–C464, C452–C471, C473–C482, and C485–C500. 4 consecutive Laminin EGF-like domains span residues 287–346 (CKCN…ECIA), 347–402 (CNCS…YCVA), 403–449 (CGCN…GCKN), and 450–502 (CGCE…GCTP). Residue N348 is glycosylated (N-linked (GlcNAc...) asparagine). Residues 503-512 (CFCFGHSSIC) form the Laminin EGF-like 5; first part domain. N-linked (GlcNAc...) asparagine glycosylation is found at N522, N658, and N740. The Laminin IV type A domain maps to 529-701 (QDKQKWAGQN…NPKQATWIEH (173 aa)). Residues 702–747 (CECLPGFVGQFCESCESGFRRETKFGGPFNHCIKCDCHNHSNSCEA) form the Laminin EGF-like 5; second part domain. Disulfide bonds link C736–C745, C738–C752, C754–C763, C766–C782, C785–C803, C806–C815, C818–C832, C835–C849, C837–C856, C859–C868, C871–C887, C890–C909, C892–C916, C918–C927, C930–C943, C946–C958, C948–C965, C967–C976, C979–C991, C994–C1006, C996–C1013, C1015–C1024, and C1027–C1038. The 33-residue stretch at 752-784 (CICEHNTAGDTCERCARGYYGDALQGTEEDCQK) folds into the Laminin EGF-like 6; truncated domain. Laminin EGF-like domains are found at residues 785–834 (CPCP…ECVE), 835–889 (CACS…NCQS), 890–945 (CGCF…GCQE), 946–993 (CNCD…GCQP), and 994–1040 (CDCE…GCLP). N-linked (GlcNAc...) asparagine glycosylation is present at N936. N-linked (GlcNAc...) asparagine glycosylation is found at N1077, N1183, N1226, N1259, N1336, N1452, and N1528.

In terms of biological role, during the formation of neuromuscular junctions at the larval stage, negatively regulates membrane protrusion from body wall muscles, probably downstream of the integrin complex formed by pat-2 and pat-3. This Caenorhabditis elegans protein is Laminin-like protein lam-2 (lam-2).